The chain runs to 349 residues: Interleukin-10 receptor subunit beta (349 aa).

The first 19 residues, M1–G19, serve as a signal peptide directing secretion. Topologically, residues M20–S220 are extracellular. 2 consecutive Fibronectin type-III domains span residues P23–T111 and I112–D215. A glycan (N-linked (GlcNAc...) asparagine) is linked at N49. A disulfide bridge links C66 with C74. Residues N102, N161, and N199 are each glycosylated (N-linked (GlcNAc...) asparagine). The cysteines at positions 188 and 209 are disulfide-linked. A helical transmembrane segment spans residues W221–C241. Residues F242–V349 lie on the Cytoplasmic side of the membrane. Phosphoserine is present on S299. A disordered region spans residues E300–V349. The segment covering G322–K341 has biased composition (basic and acidic residues).

This sequence belongs to the type II cytokine receptor family. In terms of assembly, heterodimer with IFNLR1.

Its subcellular location is the membrane. Shared cell surface receptor required for the activation of five class 2 cytokines: IL10, IL22, IL26, IL28, and IFNL1. The IFNLR1/IL10RB dimer is a receptor for the cytokine ligands IFNL2 and IFNL3 and mediates their antiviral activity. The ligand/receptor complex stimulate the activation of the JAK/STAT signaling pathway leading to the expression of IFN-stimulated genes (ISG), which contribute to the antiviral state. The sequence is that of Interleukin-10 receptor subunit beta (Il10rb) from Mus musculus (Mouse).